We begin with the raw amino-acid sequence, 385 residues long: Pepsin A (385 aa).

The N-terminal stretch at 1 to 15 (MKWLLLLSLVVLSEC) is a signal peptide. Residues 16–59 (LVKVPLVRKKSLRQNLIKNGKLKDFLKTHKHNPASKYFPEAAAL) constitute a propeptide, activation peptide. The 310-residue stretch at 73–382 (YFGTIGIGTP…DRANNKVGLA (310 aa)) folds into the Peptidase A1 domain. Asp91 is an active-site residue. Cysteines 104 and 109 form a disulfide. Ser127 carries the post-translational modification Phosphoserine. An intrachain disulfide couples Cys265 to Cys269. Asp274 is an active-site residue. Cys308 and Cys341 are disulfide-bonded.

The protein belongs to the peptidase A1 family. Post-translationally, minor amounts of the active enzyme occur with 'Ala-58' at the amino end.

It localises to the secreted. It catalyses the reaction Preferential cleavage: hydrophobic, preferably aromatic, residues in P1 and P1' positions. Cleaves 1-Phe-|-Val-2, 4-Gln-|-His-5, 13-Glu-|-Ala-14, 14-Ala-|-Leu-15, 15-Leu-|-Tyr-16, 16-Tyr-|-Leu-17, 23-Gly-|-Phe-24, 24-Phe-|-Phe-25 and 25-Phe-|-Tyr-26 bonds in the B chain of insulin.. Shows particularly broad specificity; although bonds involving phenylalanine and leucine are preferred, many others are also cleaved to some extent. The polypeptide is Pepsin A (PGA) (Sus scrofa (Pig)).